Here is a 328-residue protein sequence, read N- to C-terminus: Hairy/enhancer-of-split related with YRPW motif-like protein (328 aa).

The disordered stretch occupies residues 1-54; sequence MKRPREPSGSDSESDGPIDVGREGELSQMARPLSTPSPSQMQARKKRRGIIEKR. Positions 42–111 are transcriptional repression and interaction with NCOR1 and SIN3A; that stretch reads QARKKRRGII…GGTGFFDARA (70 aa). One can recognise a bHLH domain in the interval 43 to 98; the sequence is ARKKRRGIIEKRRRDRINSSLSELRRLVPTAFEKQGSSKLEKAEVLQMTVDHLKML. Residues 116 to 153 form the Orange domain; sequence FRSIGFRECLTEVIRYLGVLEGPSSRADPVRIRLLSHL. Residues 236-272 form a disordered region; it reads LLPSRGASSTRRARPLERPAAPLPAAPSGRATRGSHM.

The protein belongs to the HEY family. As to quaternary structure, self-associates. Interacts with GATA4, GATA6, HES1, HEY1 and HEY2. Interacts with HDAC1, NCOR1 and SIN3A.

It is found in the nucleus. Downstream effector of Notch signaling which may be required for cardiovascular development. Transcriptional repressor which binds preferentially to the canonical E box sequence 5'-CACGTG-3'. Represses transcription by the cardiac transcriptional activators GATA4 and GATA6. The sequence is that of Hairy/enhancer-of-split related with YRPW motif-like protein (HEYL) from Bos taurus (Bovine).